A 217-amino-acid chain; its full sequence is MKLNIAYPTNGTQKMFEIERRNEVRLYDKKIGDQFDGGILGEEFEGTIMEITGGDDYQGFPMVSGHLTKKRVRPLLSKGDAGYRCRRKGVRRRKSVRGSIVSEEICVLNLIILRPGEKEIDGLTNAVNDVSHLPRKEKKLRKMFGVPDEEKNVVGYIRNILKSECDDPKKIPKIRHNGKRMKREQERREQIMKIRLERKRILEEERKEYLEKYFNKA.

The protein belongs to the eukaryotic ribosomal protein eS6 family. Phosphorylated.

The chain is Small ribosomal subunit protein eS6 (RPS6) from Encephalitozoon cuniculi (strain GB-M1) (Microsporidian parasite).